A 386-amino-acid chain; its full sequence is uncharacterized protein (386 aa).

Helical transmembrane passes span 3–23, 42–62, 72–92, 102–122, 145–165, 183–203, 212–232, 244–264, 276–296, 308–328, and 333–353; these read WFSL…LVAI, LVGH…IFLW, FASF…SLFG, VPTI…LGVF, ILST…IAYF, FGGH…WLLL, WFLN…QIFL, TWGY…ITLV, ILVL…MIVG, VIAS…QELG, and LGKF…FLSS.

This sequence to R.prowazekii RP382.

It localises to the cell membrane. This is an uncharacterized protein from Aquifex aeolicus (strain VF5).